A 76-amino-acid polypeptide reads, in one-letter code: Large ribosomal subunit protein uL24 (76 aa).

The protein belongs to the universal ribosomal protein uL24 family. Part of the 50S ribosomal subunit.

In terms of biological role, one of two assembly initiator proteins, it binds directly to the 5'-end of the 23S rRNA, where it nucleates assembly of the 50S subunit. One of the proteins that surrounds the polypeptide exit tunnel on the outside of the subunit. The polypeptide is Large ribosomal subunit protein uL24 (Wolinella succinogenes (strain ATCC 29543 / DSM 1740 / CCUG 13145 / JCM 31913 / LMG 7466 / NCTC 11488 / FDC 602W) (Vibrio succinogenes)).